Consider the following 95-residue polypeptide: Histone-like DNA-binding protein (95 aa).

Belongs to the bacterial histone-like protein family.

This Rickettsia montanensis protein is Histone-like DNA-binding protein.